Reading from the N-terminus, the 399-residue chain is Proteasome-activating nucleotidase (399 aa).

Positions 19 to 60 (ITYLKRRIRQLELQVRMLEADKERLERELSRLRSEMSRLRQP) form a coiled coil. Residues 184–189 (GCGKTL) and His-323 each bind ATP. The segment at 397 to 399 (IYG) is docks into pockets in the proteasome alpha-ring to cause gate opening.

The protein belongs to the AAA ATPase family. In terms of assembly, homohexamer. The hexameric complex has a two-ring architecture resembling a top hat that caps the 20S proteasome core at one or both ends. Upon ATP-binding, the C-terminus of PAN interacts with the alpha-rings of the proteasome core by binding to the intersubunit pockets.

It localises to the cytoplasm. In terms of biological role, ATPase which is responsible for recognizing, binding, unfolding and translocation of substrate proteins into the archaeal 20S proteasome core particle. Is essential for opening the gate of the 20S proteasome via an interaction with its C-terminus, thereby allowing substrate entry and access to the site of proteolysis. Thus, the C-termini of the proteasomal ATPase function like a 'key in a lock' to induce gate opening and therefore regulate proteolysis. Unfolding activity requires energy from ATP hydrolysis, whereas ATP binding alone promotes ATPase-20S proteasome association which triggers gate opening, and supports translocation of unfolded substrates. This is Proteasome-activating nucleotidase from Pyrococcus horikoshii (strain ATCC 700860 / DSM 12428 / JCM 9974 / NBRC 100139 / OT-3).